The sequence spans 613 residues: Threonine--tRNA ligase (613 aa).

The tract at residues 1-147 (MRLLLIHARS…TITPQESAPQ (147 aa)) is editing domain. Catalytic stretches follow at residues 199 to 495 (PRYI…PALP) and 200 to 495 (RYID…PALP). Residues C292, H343, and H464 each contribute to the Zn(2+) site.

This sequence belongs to the class-II aminoacyl-tRNA synthetase family. In terms of assembly, homodimer. The cofactor is Zn(2+).

The protein resides in the cytoplasm. The catalysed reaction is tRNA(Thr) + L-threonine + ATP = L-threonyl-tRNA(Thr) + AMP + diphosphate + H(+). Catalyzes the attachment of threonine to tRNA(Thr) in a two-step reaction: L-threonine is first activated by ATP to form Thr-AMP and then transferred to the acceptor end of tRNA(Thr). Also edits incorrectly charged L-seryl-tRNA(Thr). This is Threonine--tRNA ligase from Caldivirga maquilingensis (strain ATCC 700844 / DSM 13496 / JCM 10307 / IC-167).